A 211-amino-acid chain; its full sequence is tRNA (guanine-N(7)-)-methyltransferase (211 aa).

E44, D69, D96, and D118 together coordinate S-adenosyl-L-methionine. D118 is an active-site residue. Position 122 (K122) interacts with substrate. The segment at 124–129 (RHEKRR) is interaction with RNA. Substrate-binding positions include D154 and 191–194 (TEYE).

It belongs to the class I-like SAM-binding methyltransferase superfamily. TrmB family.

The catalysed reaction is guanosine(46) in tRNA + S-adenosyl-L-methionine = N(7)-methylguanosine(46) in tRNA + S-adenosyl-L-homocysteine. Its pathway is tRNA modification; N(7)-methylguanine-tRNA biosynthesis. In terms of biological role, catalyzes the formation of N(7)-methylguanine at position 46 (m7G46) in tRNA. The polypeptide is tRNA (guanine-N(7)-)-methyltransferase (Streptococcus equi subsp. zooepidemicus (strain MGCS10565)).